Consider the following 439-residue polypeptide: Serine/threonine-protein kinase 2 (439 aa).

The Protein kinase domain maps to 87-439 (NDDFYHISTG…IFSDWINGGN (353 aa)). ATP is bound by residues 93–101 (ISTGGYGIV) and Lys117. Asp307 serves as the catalytic Proton acceptor.

It belongs to the protein kinase superfamily. Ser/Thr protein kinase family. In terms of processing, phosphorylated in vivo. Autophosphorylated in vitro.

The protein localises to the host endoplasmic reticulum. The protein resides in the host endoplasmic reticulum-Golgi intermediate compartment. The catalysed reaction is L-seryl-[protein] + ATP = O-phospho-L-seryl-[protein] + ADP + H(+). It carries out the reaction L-threonyl-[protein] + ATP = O-phospho-L-threonyl-[protein] + ADP + H(+). In terms of biological role, essential serine-protein kinase involved in the early stage of virion morphogenesis. The protein is Serine/threonine-protein kinase 2 (OPG054) of Vaccinia virus (strain Tian Tan) (VACV).